The following is a 337-amino-acid chain: Anthranilate phosphoribosyltransferase (337 aa).

Residues glycine 81, 84–85, serine 89, 91–94, 109–117, and alanine 121 each bind 5-phospho-alpha-D-ribose 1-diphosphate; these read GD, NVST, and KHGNRALSS. Glycine 81 contacts anthranilate. Residue serine 93 coordinates Mg(2+). Residue asparagine 112 participates in anthranilate binding. Arginine 167 is an anthranilate binding site. Positions 226 and 227 each coordinate Mg(2+).

This sequence belongs to the anthranilate phosphoribosyltransferase family. Homodimer. It depends on Mg(2+) as a cofactor.

The enzyme catalyses N-(5-phospho-beta-D-ribosyl)anthranilate + diphosphate = 5-phospho-alpha-D-ribose 1-diphosphate + anthranilate. The protein operates within amino-acid biosynthesis; L-tryptophan biosynthesis; L-tryptophan from chorismate: step 2/5. Functionally, catalyzes the transfer of the phosphoribosyl group of 5-phosphorylribose-1-pyrophosphate (PRPP) to anthranilate to yield N-(5'-phosphoribosyl)-anthranilate (PRA). In Bradyrhizobium sp. (strain BTAi1 / ATCC BAA-1182), this protein is Anthranilate phosphoribosyltransferase.